We begin with the raw amino-acid sequence, 499 residues long: MWTADEIAQLCYAHYNVRLPKQGKPEPNREWTLLAAVVKIQASANQACDIPEKEVQVTKEVVSMGTGTKCIGQSKMRESGDILNDSHAEIIARRSFQRYLLHQLHLAAVLKEDSIFVPGTQRGLWRLRPDLSFVFFSSHTPCGDASIIPMLEFEEQPCCPVIRSWANNSPVQETENLEDSKDKRNCEDPASPVAKKMRLGTPARSLSNCVAHHGTQESGPVKPDVSSSDLTKEEPDAANGIASGSFRVVDVYRTGAKCVPGETGDLREPGAAYHQVGLLRVKPGRGDRTCSMSCSDKMARWNVLGCQGALLMHFLEKPIYLSAVVIGKCPYSQEAMRRALTGRCEETLVLPRGFGVQELEIQQSGLLFEQSRCAVHRKRGDSPGRLVPCGAAISWSAVPQQPLDVTANGFPQGTTKKEIGSPRARSRISKVELFRSFQKLLSSIADDEQPDSIRVTKKLDTYQEYKDAASAYQEAWGALRRIQPFASWIRNPPDYHQFK.

The region spanning 63–498 (SMGTGTKCIG…IRNPPDYHQF (436 aa)) is the A to I editase domain. H87 provides a ligand contact to Zn(2+). The active-site Proton donor is E89. R93 and R94 together coordinate 1D-myo-inositol hexakisphosphate. C142 is a binding site for Zn(2+). Disordered regions lie at residues 170–194 (PVQE…SPVA) and 212–237 (HHGT…EPDA). A compositionally biased stretch (basic and acidic residues) spans 178 to 187 (EDSKDKRNCE). S191 carries the post-translational modification Phosphoserine. Position 294 (C294) interacts with Zn(2+). Positions 297, 300, 430, and 466 each coordinate 1D-myo-inositol hexakisphosphate.

The protein belongs to the ADAT1 family. It depends on 1D-myo-inositol hexakisphosphate as a cofactor.

The enzyme catalyses adenosine(37) in tRNA(Ala) + H2O + H(+) = inosine(37) in tRNA(Ala) + NH4(+). Functionally, specifically deaminates adenosine-37 to inosine in tRNA-Ala. This is tRNA-specific adenosine deaminase 1 (Adat1) from Mus musculus (Mouse).